Consider the following 170-residue polypeptide: Phosphopantetheine adenylyltransferase (170 aa).

Residue Thr-18 participates in substrate binding. Residues Thr-18–Phe-19 and His-26 each bind ATP. Residues Lys-50, Leu-84, and Arg-98 each contribute to the substrate site. ATP contacts are provided by residues Gly-99–Arg-101, Glu-109, and Trp-134–Ser-140.

Belongs to the bacterial CoaD family. As to quaternary structure, homohexamer. The cofactor is Mg(2+).

It is found in the cytoplasm. It carries out the reaction (R)-4'-phosphopantetheine + ATP + H(+) = 3'-dephospho-CoA + diphosphate. It participates in cofactor biosynthesis; coenzyme A biosynthesis; CoA from (R)-pantothenate: step 4/5. Its function is as follows. Reversibly transfers an adenylyl group from ATP to 4'-phosphopantetheine, yielding dephospho-CoA (dPCoA) and pyrophosphate. The chain is Phosphopantetheine adenylyltransferase from Desulfotalea psychrophila (strain LSv54 / DSM 12343).